We begin with the raw amino-acid sequence, 295 residues long: Pyridoxal 5'-phosphate synthase subunit PdxS (295 aa).

Asp25 is a D-ribose 5-phosphate binding site. Residue Lys82 is the Schiff-base intermediate with D-ribose 5-phosphate of the active site. Gly154 is a D-ribose 5-phosphate binding site. Arg166 serves as a coordination point for D-glyceraldehyde 3-phosphate. Residues Gly215 and Gly236 to Ser237 contribute to the D-ribose 5-phosphate site.

The protein belongs to the PdxS/SNZ family. As to quaternary structure, in the presence of PdxT, forms a dodecamer of heterodimers.

It carries out the reaction aldehydo-D-ribose 5-phosphate + D-glyceraldehyde 3-phosphate + L-glutamine = pyridoxal 5'-phosphate + L-glutamate + phosphate + 3 H2O + H(+). It participates in cofactor biosynthesis; pyridoxal 5'-phosphate biosynthesis. In terms of biological role, catalyzes the formation of pyridoxal 5'-phosphate from ribose 5-phosphate (RBP), glyceraldehyde 3-phosphate (G3P) and ammonia. The ammonia is provided by the PdxT subunit. Can also use ribulose 5-phosphate and dihydroxyacetone phosphate as substrates, resulting from enzyme-catalyzed isomerization of RBP and G3P, respectively. The sequence is that of Pyridoxal 5'-phosphate synthase subunit PdxS from Bacillus mycoides (strain KBAB4) (Bacillus weihenstephanensis).